The chain runs to 141 residues: Nucleoside diphosphate kinase (141 aa).

Residues K11, F59, R87, T93, R104, and N114 each coordinate ATP. The active-site Pros-phosphohistidine intermediate is the H117.

Belongs to the NDK family. In terms of assembly, homotetramer. The cofactor is Mg(2+).

It localises to the cytoplasm. It catalyses the reaction a 2'-deoxyribonucleoside 5'-diphosphate + ATP = a 2'-deoxyribonucleoside 5'-triphosphate + ADP. It carries out the reaction a ribonucleoside 5'-diphosphate + ATP = a ribonucleoside 5'-triphosphate + ADP. Functionally, major role in the synthesis of nucleoside triphosphates other than ATP. The ATP gamma phosphate is transferred to the NDP beta phosphate via a ping-pong mechanism, using a phosphorylated active-site intermediate. The chain is Nucleoside diphosphate kinase from Burkholderia ambifaria (strain MC40-6).